Here is a 555-residue protein sequence, read N- to C-terminus: 2-isopropylmalate synthase (555 aa).

In terms of domain architecture, Pyruvate carboxyltransferase spans 30–303 (PIWCSVDLRD…DPGLDCTDIN (274 aa)). The Mg(2+) site is built by aspartate 39, histidine 242, histidine 244, and asparagine 278. The regulatory domain stretch occupies residues 437–555 (QPDARIKFVD…VSAANRVIAK (119 aa)).

It belongs to the alpha-IPM synthase/homocitrate synthase family. LeuA type 2 subfamily. As to quaternary structure, homodimer. Mg(2+) serves as cofactor.

The protein resides in the cytoplasm. It carries out the reaction 3-methyl-2-oxobutanoate + acetyl-CoA + H2O = (2S)-2-isopropylmalate + CoA + H(+). It functions in the pathway amino-acid biosynthesis; L-leucine biosynthesis; L-leucine from 3-methyl-2-oxobutanoate: step 1/4. Functionally, catalyzes the condensation of the acetyl group of acetyl-CoA with 3-methyl-2-oxobutanoate (2-ketoisovalerate) to form 3-carboxy-3-hydroxy-4-methylpentanoate (2-isopropylmalate). The sequence is that of 2-isopropylmalate synthase from Brucella melitensis biotype 1 (strain ATCC 23456 / CCUG 17765 / NCTC 10094 / 16M).